Reading from the N-terminus, the 161-residue chain is Ribosome maturation factor RimP (161 aa).

This sequence belongs to the RimP family.

The protein resides in the cytoplasm. In terms of biological role, required for maturation of 30S ribosomal subunits. This is Ribosome maturation factor RimP from Myxococcus xanthus (strain DK1622).